The primary structure comprises 192 residues: Fumarylpyruvate hydrolase (192 aa).

Positions 41, 43, and 72 each coordinate a divalent metal cation.

This sequence belongs to the FAH family. Mg(2+) is required as a cofactor. It depends on Mn(2+) as a cofactor.

The catalysed reaction is 3-fumarylpyruvate + H2O = fumarate + pyruvate + H(+). It functions in the pathway aromatic compound metabolism; naphthalene degradation. Involved in the catabolism of gentisate (2,5-dihydroxybenzoate) a key intermediates in the aerobic pathways for the metabolism of a large number of aromatic compoun such as naphthalene. Catalyzes the hydrolytic cleavage of fumarylpyruvate to form fumarate and pyruvate. This Ralstonia sp protein is Fumarylpyruvate hydrolase.